A 592-amino-acid chain; its full sequence is MSRQSSVSFRSGGSRSFSTASAITPSVSRTSFTSVSRSGGGGGGGFGRVSLGGACGVGGYGSRSLYNLGGSKWISISTSGGSFRNRFGAGAGAGGGYGFGGGAGSGFGFGGGAGGGFGLGGGAGFGGGYGGPGFPVCPPGGIQEVTVNQSLLTPLNLQIDPSIQRVRTEEREQIKTLNNKFASFIDKVRFLEQQNKVLDTKWTLLQEQGTKTVRQNLEPLFEQYINNLRRQLDSIVGERGRLDSELRNMQDLVEDFKNKYEDEINKRTTAENEFVMLKKDVDAAYMNKVELEAKVDALMDEINFMKMFFDAELSQMQTHVSDTSVVLSMDNNRNLDLDSIIAEVKAQYEEIANRSRTEAESWYQTKYEELQQTAGRHGDDLRNTKHEISEMNRMIQRLRAEIDNVKKQCANLQNAIADAEQRGELALKDARNKLAELEEALQKAKQDMARLLREYQELMNTKLALDVEIATYRKLLEGEECRLSGEGVGPVNISVVTSSVSSGYGSGSGYGGGLGGGLGGGLGGSLAGGGSGSYYSSSSGGVGLGGGLSVGGSGFSASSGRGLGVGFGSGGGSSSSVKFVSTTSSSRKSFKS.

The span at 1 to 18 shows a compositional bias: low complexity; that stretch reads MSRQSSVSFRSGGSRSFS. Residues 1–20 are disordered; it reads MSRQSSVSFRSGGSRSFSTA. The head stretch occupies residues 1-169; the sequence is MSRQSSVSFR…DPSIQRVRTE (169 aa). Residues S5, S8, S16, and S21 each carry the phosphoserine modification. Residue T24 is modified to Phosphothreonine; by CDK1. Residues S26, S36, S50, S64, S71, S75, and S82 each carry the phosphoserine modification. T153 bears the Phosphothreonine; by CDK1 mark. T168 carries the post-translational modification Phosphothreonine; by AURKB. Positions 170 to 205 are coil 1A; the sequence is EREQIKTLNNKFASFIDKVRFLEQQNKVLDTKWTLL. Positions 170–483 constitute an IF rod domain; it reads EREQIKTLNN…KLLEGEECRL (314 aa). A linker 1 region spans residues 206–224; the sequence is QEQGTKTVRQNLEPLFEQY. Residues 225–317 form a coil 1B region; the sequence is INNLRRQLDS…FFDAELSQMQ (93 aa). The tract at residues 318-340 is linker 12; the sequence is THVSDTSVVLSMDNNRNLDLDSI. A coil 2 region spans residues 341-479; sequence IAEVKAQYEE…ATYRKLLEGE (139 aa). Residues 480-592 form a tail region; the sequence is ECRLSGEGVG…TSSSRKSFKS (113 aa). Residues 568–592 form a disordered region; it reads GSGGGSSSSVKFVSTTSSSRKSFKS. Positions 574-592 are enriched in low complexity; it reads SSSVKFVSTTSSSRKSFKS.

Belongs to the intermediate filament family. As to quaternary structure, heterodimer of a type I and a type II keratin. Heterodimer with type I keratin KRT25 leading to the formation of keratin intermediate filament (KIF) network. Forms a heterodimer (via 2B domains) with KRT14 (via 2B domains). Interacts with TCHP. Interacts with EPPK1. Interacts with AMELX. Interacts with PKP1 (via N-terminus) and PKP2. Phosphorylated by CDK1, AURKB and Rho-kinase, phosphorylation is regulated by the cell cycle. Thr-24 phosphorylation, mediated by CDK1, peaks during prometaphase or metaphase cells with phosphorylated filamentous structures evident throughout the cytoplasm during early mitosis. CDK1 phosphorylates Thr-24 in mitotic cells at the site of injury. Post-translationally, O-glycosylated.

The protein localises to the cytoplasm. Functionally, required for the formation of keratin intermediate filaments in the basal epidermis and maintenance of the skin barrier in response to mechanical stress. Regulates the recruitment of Langerhans cells to the epidermis, potentially by modulation of the abundance of macrophage chemotactic cytokines, macrophage inflammatory cytokines and CTNND1 localization in keratinocytes. The chain is Keratin, type II cytoskeletal 5 (KRT5) from Pan troglodytes (Chimpanzee).